The following is a 754-amino-acid chain: Lysyl oxidase homolog 3 (754 aa).

Positions 1-26 (MRAVSVWYCCPWGLLLLHCLCSFSVG) are cleaved as a signal peptide. SRCR domains follow at residues 45–146 (FRLA…VICK), 170–283 (VRLR…VSCV), 308–408 (VRLK…VRCN), and 418–526 (IRLS…VICS). Intrachain disulfides connect C71–C135, C84–C145, C115–C125, C202–C272, C215–C282, C249–C259, C333–C397, C346–C407, C377–C387, C447–C512, C460–C525, C493–C503, C555–C561, C607–C655, C639–C645, C667–C677, and C714–C728. An N-linked (GlcNAc...) asparagine glycan is attached at N112. Residue N267 is glycosylated (N-linked (GlcNAc...) asparagine). N391 and N482 each carry an N-linked (GlcNAc...) asparagine glycan. The tract at residues 530–733 (SDLLLHSALV…WVHNCHIGDA (204 aa)) is lysyl-oxidase like. Residues H608, H610, and H612 each contribute to the Cu cation site. N626 carries N-linked (GlcNAc...) asparagine glycosylation. Residues 635-671 (KASFCLEDTECQEDVSKRYECANFGEQGITVGCWDLY) constitute a cross-link (lysine tyrosylquinone (Lys-Tyr)). A 2',4',5'-topaquinone modification is found at Y671.

Belongs to the lysyl oxidase family. It depends on Cu cation as a cofactor. The cofactor is lysine tyrosylquinone residue. In terms of processing, the lysine tyrosylquinone cross-link (LTQ) is generated by condensation of the epsilon-amino group of a lysine with a topaquinone produced by oxidation of tyrosine. As to expression, expressed in palate: predominantly present in the palate mesenchyme and tongue (at protein level). In spine, expressed in the original intervertebral disk, cartilage primordia, anterior and posterior longitudinal ligaments, meninges of spinal cord, lung and heart. In eyes, strongly expressed in the skin of the eyelid and weakly expressed in the cornea and sclera. In lung, predominantly expressed in the pulmonary mesenchyme. In developing muscle, expressed at myofiber ends (at protein level).

It localises to the secreted. The protein localises to the extracellular space. It is found in the cytoplasm. The protein resides in the nucleus. The enzyme catalyses L-lysyl-[protein] + O2 + H2O = (S)-2-amino-6-oxohexanoyl-[protein] + H2O2 + NH4(+). It catalyses the reaction N(6)-acetyl-L-lysyl-[protein] + O2 + H2O = acetamide + (S)-2-amino-6-oxohexanoyl-[protein] + H2O2. Protein-lysine 6-oxidase that mediates the oxidation of peptidyl lysine residues to allysine in target proteins. Catalyzes the post-translational oxidative deamination of peptidyl lysine residues in precursors of elastin and different types of collagens, a prerequisite in the formation of cross-links between collagens and elastin. Required for somite boundary formation by catalyzing oxidation of fibronectin (FN1), enhancing integrin signaling in myofibers and their adhesion to the myotendinous junction (MTJ). Acts as a regulator of inflammatory response by inhibiting differentiation of naive CD4(+) T-cells into T-helper Th17 or regulatory T-cells (Treg): acts by interacting with STAT3 in the nucleus and catalyzing both deacetylation and oxidation of lysine residues on STAT3, leading to disrupt STAT3 dimerization and inhibit STAT3 transcription activity. Oxidation of lysine residues to allysine on STAT3 preferentially takes place on lysine residues that are acetylated. Also able to catalyze deacetylation of lysine residues on STAT3. The chain is Lysyl oxidase homolog 3 from Mus musculus (Mouse).